The sequence spans 640 residues: Biosynthetic arginine decarboxylase (640 aa).

At lysine 105 the chain carries N6-(pyridoxal phosphate)lysine. 290-300 contacts substrate; it reads FDVGGGLAVDY.

Belongs to the Orn/Lys/Arg decarboxylase class-II family. SpeA subfamily. Requires Mg(2+) as cofactor. It depends on pyridoxal 5'-phosphate as a cofactor.

The catalysed reaction is L-arginine + H(+) = agmatine + CO2. In terms of biological role, catalyzes the biosynthesis of agmatine from arginine. The sequence is that of Biosynthetic arginine decarboxylase from Vibrio cholerae serotype O1 (strain ATCC 39315 / El Tor Inaba N16961).